Consider the following 247-residue polypeptide: Phosphonates import ATP-binding protein PhnC (247 aa).

An ABC transporter domain is found at 5 to 246 (IEVKNLVKNY…EDDIRKVYQT (242 aa)). 37–44 (GESGAGKS) lines the ATP pocket.

Belongs to the ABC transporter superfamily. Phosphonates importer (TC 3.A.1.9.1) family. The complex is composed of two ATP-binding proteins (PhnC), two transmembrane proteins (PhnE) and a solute-binding protein (PhnD).

It is found in the cell inner membrane. It carries out the reaction phosphonate(out) + ATP + H2O = phosphonate(in) + ADP + phosphate + H(+). Functionally, part of the ABC transporter complex PhnCDE involved in phosphonates import. Responsible for energy coupling to the transport system. The protein is Phosphonates import ATP-binding protein PhnC of Fusobacterium nucleatum subsp. nucleatum (strain ATCC 25586 / DSM 15643 / BCRC 10681 / CIP 101130 / JCM 8532 / KCTC 2640 / LMG 13131 / VPI 4355).